We begin with the raw amino-acid sequence, 375 residues long: Trans-enoyl reductase cghC (375 aa).

NADP(+) is bound at residue 48-51 (VDTK). 135–142 (NAWYTSGW) contacts substrate. Residues 188–191 (SSST), 211–214 (SARN), and 276–277 (LD) each bind NADP(+). Residue 297–301 (GPELV) participates in substrate binding. 366-367 (VS) is an NADP(+) binding site.

This sequence belongs to the zinc-containing alcohol dehydrogenase family. Monomer.

The catalysed reaction is (2S,4S)-4-hydroxy-4-methylglutamate + 8 malonyl-CoA + 3 S-adenosyl-L-methionine + ATP + 8 NADPH + 11 H(+) = (2S)-3-[(2S)-3,5-dioxo-4-[(2E,4R,6R,8E,10E,12E)-4,6,12-trimethyltetradeca-2,8,10,12-tetraenoyl]pyrrolidin-2-yl]-2-hydroxy-2-methylpropanoate + AMP + 3 S-adenosyl-L-homocysteine + 8 CO2 + diphosphate + 8 NADP(+) + 8 CoA + 6 H2O. The protein operates within secondary metabolite biosynthesis. Functionally, trans-enoyl reductase; part of the gene cluster that mediates the biosynthesis of the tetramic acid Sch210972, a potential anti-HIV fungal natural product that contains a decalin core. The PKS module of cghG together with the enoylreductase cghC catalyze the formation of the polyketide unit which is then conjugated to 4-hydroxyl-4-methyl glutamate (HMG) by the condensation domain of the cghG NRPS module. One unique structural feature of Sch210972 is the tetramic acid motif proposed to be derived from the non-proteinogenic amino acid HMG, by a Dieckmann-type condensation catalyzed by the reductase domain of cghG. The aldolase cghB catalyzes the aldol condensation of 2 molecules of pyruvic acid to yield the intermediate 4-hydroxyl-4-methyl-2-oxoglutarate (HMOG), which can then be stereoselectively transaminated by an unidentified enzyme to form HMG. The Diels-Alderase cghA then uses the Dieckmann product released by cghG as substrate and catalyzes the Diels-Alder cycloaddition to form the decalin ring of Sch210972. CghA also suppresses the nonenzymatic formation of the alternative stereoisomer. This chain is Trans-enoyl reductase cghC, found in Chaetomium globosum (strain ATCC 6205 / CBS 148.51 / DSM 1962 / NBRC 6347 / NRRL 1970) (Soil fungus).